A 298-amino-acid chain; its full sequence is Myoblast determination protein 1 homolog (298 aa).

Residues 53–73 are compositionally biased toward basic and acidic residues; sequence PEEHPHTRAPPREPTEEEHVR. The disordered stretch occupies residues 53–77; it reads PEEHPHTRAPPREPTEEEHVRAPSG. In terms of domain architecture, bHLH spans 100–151; sequence DRRKAATMRERRRLSKVNEAFETLKRCTSTNPNQRLPKVEILRNAIRYIESL. Disordered regions lie at residues 170 to 220 and 242 to 298; these read SGES…GKSS and CPIL…YQVL. 2 stretches are compositionally biased toward polar residues: residues 173–183 and 257–284; these read SDASSPRSNCS and CSPQEGGNLSDSGAQIPSPTNCTPLPQE.

In terms of assembly, efficient DNA binding requires dimerization with another bHLH protein. Seems to form active heterodimers with ITF-2.

It localises to the nucleus. Acts as a transcriptional activator that promotes transcription of muscle-specific target genes and plays a role in muscle differentiation. Induces fibroblasts to differentiate into myoblasts. Interacts with and is inhibited by the twist protein. This interaction probably involves the basic domains of both proteins. The sequence is that of Myoblast determination protein 1 homolog (MYOD1) from Gallus gallus (Chicken).